Here is a 339-residue protein sequence, read N- to C-terminus: Ribosomal RNA small subunit methyltransferase H (339 aa).

S-adenosyl-L-methionine contacts are provided by residues 52–54 (GGH), Asp-71, Phe-98, Asp-130, and Gln-137.

The protein belongs to the methyltransferase superfamily. RsmH family.

Its subcellular location is the cytoplasm. The enzyme catalyses cytidine(1402) in 16S rRNA + S-adenosyl-L-methionine = N(4)-methylcytidine(1402) in 16S rRNA + S-adenosyl-L-homocysteine + H(+). Specifically methylates the N4 position of cytidine in position 1402 (C1402) of 16S rRNA. This is Ribosomal RNA small subunit methyltransferase H from Corynebacterium diphtheriae (strain ATCC 700971 / NCTC 13129 / Biotype gravis).